The chain runs to 105 residues: Iron-sulfur cluster assembly protein CyaY (105 aa).

Belongs to the frataxin family.

Its function is as follows. Involved in iron-sulfur (Fe-S) cluster assembly. May act as a regulator of Fe-S biogenesis. This chain is Iron-sulfur cluster assembly protein CyaY, found in Paraburkholderia phymatum (strain DSM 17167 / CIP 108236 / LMG 21445 / STM815) (Burkholderia phymatum).